We begin with the raw amino-acid sequence, 268 residues long: MASTQCFLHQHALSSSAARTTSSVSSQRYVSSLKPNQLVCRAQKQSSPQEDDGNSVVVSRRLALTVLIGAAAIGSKVSPADAAYGEAANVFGKPKENTDFLAYNGDGFKLQVPAKWNPSKEVEFPGQVLRYEDNFDSTSNLIVTVTPTDKKSITDYGSPEEFLTQVDFLLGKQAYFGKTDSEGGFESGAVATANLLETSSSTVGGKEYYILSVLTRTADGDEGGKHQLISATVNGGKLYICKAQAGDKRWFKGARKFVENAATSFSVA.

A chloroplast-targeting transit peptide spans M1 to A82.

It belongs to the PsbP family.

The protein localises to the plastid. The protein resides in the chloroplast thylakoid membrane. Functionally, may be involved in the regulation of photosystem II. In Nicotiana tabacum (Common tobacco), this protein is Oxygen-evolving enhancer protein 2-1, chloroplastic (PSBP1).